The chain runs to 90 residues: Large ribosomal subunit protein bL27 (90 aa).

The interval 1–20 (MAHKKAGGSSRNGRDSAGKR) is disordered.

Belongs to the bacterial ribosomal protein bL27 family.

This chain is Large ribosomal subunit protein bL27, found in Nitrobacter hamburgensis (strain DSM 10229 / NCIMB 13809 / X14).